A 68-amino-acid chain; its full sequence is Wasabi receptor toxin (68 aa).

The N-terminal stretch at 1–21 (MKYFTLALTLLFLLLINPCKD) is a signal peptide. Residues 22 to 35 (MNFAWAESSEKVER) constitute a propeptide that is removed on maturation. Intrachain disulfides connect Cys44-Cys62 and Cys48-Cys58.

This sequence belongs to the short scorpion toxin superfamily. Potassium channel inhibitor kappa-KTx family. Kappa-KTx 1 subfamily. As to quaternary structure, monomer. As to expression, expressed by the venom gland.

It is found in the secreted. The protein localises to the host cytoplasm. In terms of biological role, cell-penetrating peptide (CPP) with defensive purpose that induces pain by specifically activating mammalian sensory neuron TRPA1 channels. It non-covalently binds to the same region than other TRPA1 agonists (irritants), but acts via a distinct biochemical mechanism. Its binding stabilizes the TRPA1 open state and diminishes calcium-permeability. Consequently, it produces pain and pain hypersensitivity, but fails to trigger efferent release of neuropeptides (CGRP) and neurogenic inflammation typically produced by noxious electrophiles. Is not active on voltage-gated potassium channels and other TRP channels. The chain is Wasabi receptor toxin from Urodacus manicatus (Black rock scorpion).